A 211-amino-acid chain; its full sequence is Protoglabretal synthase MOI1 (211 aa).

A run of 5 helical transmembrane segments spans residues 16–36 (ASLH…TWII), 50–70 (LICW…YYVF), 104–124 (VLGI…LAAY), 135–155 (IFQF…FLTA), and 179–199 (IWVI…HAIC). An EXPERA domain is found at 46 to 188 (IERLLICWWA…IWVIVPMLIA (143 aa)).

This sequence belongs to the EBP family. In terms of tissue distribution, expressed in maturing fruits and in juice vesicles.

Its subcellular location is the membrane. The catalysed reaction is 7,8-epoxymelianol = protoglabretal. It participates in secondary metabolite biosynthesis; terpenoid biosynthesis. Isomerase involved in the biosynthesis of glabretanes triterpene natural products such as glabretal, a component with in vitro antiproliferative properties on lymphocytes. Catalyzes the conversion of 7,8-epoxymelianol to protoglabretal via skeletal rearrangements. This chain is Protoglabretal synthase MOI1, found in Citrus sinensis (Sweet orange).